Reading from the N-terminus, the 379-residue chain is Deoxyhypusine synthase (379 aa).

Residues 104–108 (SNLVS), 130–132 (TAG), E136, and D237 each bind NAD(+). 135 to 136 (EE) serves as a coordination point for spermidine. Residue D242 participates in spermidine binding. NAD(+) is bound at residue G293. H298 contacts spermidine. Residue 318-319 (TA) participates in NAD(+) binding. Spermidine-binding positions include 324-326 (GSD) and 333-339 (EAVSWGK). K339 acts as the Nucleophile in catalysis. 352-353 (DA) lines the NAD(+) pocket.

This sequence belongs to the deoxyhypusine synthase family. As to quaternary structure, homotetramer. It depends on NAD(+) as a cofactor.

It catalyses the reaction [eIF5A protein]-L-lysine + spermidine = [eIF5A protein]-deoxyhypusine + propane-1,3-diamine. It functions in the pathway protein modification; eIF5A hypusination. Its function is as follows. Catalyzes the NAD-dependent oxidative cleavage of spermidine and the subsequent transfer of the butylamine moiety of spermidine to the epsilon-amino group of a specific lysine residue of the eIF-5A precursor protein to form the intermediate deoxyhypusine residue. Also able to produce homospermidine from putrescine. This is Deoxyhypusine synthase (DHS1) from Nicotiana tabacum (Common tobacco).